The chain runs to 154 residues: Large ribosomal subunit protein uL22c (154 aa).

This sequence belongs to the universal ribosomal protein uL22 family. Part of the 50S ribosomal subunit.

It localises to the plastid. The protein localises to the chloroplast. Functionally, this protein binds specifically to 23S rRNA. In terms of biological role, the globular domain of the protein is located near the polypeptide exit tunnel on the outside of the subunit, while an extended beta-hairpin is found that lines the wall of the exit tunnel in the center of the 70S ribosome. This is Large ribosomal subunit protein uL22c (rpl22) from Helianthus annuus (Common sunflower).